The primary structure comprises 72 residues: Translational regulator CsrA (72 aa).

Belongs to the CsrA/RsmA family. In terms of assembly, homodimer; the beta-strands of each monomer intercalate to form a hydrophobic core, while the alpha-helices form wings that extend away from the core.

Its subcellular location is the cytoplasm. A translational regulator that binds mRNA to regulate translation initiation and/or mRNA stability. Usually binds in the 5'-UTR at or near the Shine-Dalgarno sequence preventing ribosome-binding, thus repressing translation. Its main target seems to be the major flagellin gene, while its function is anatagonized by FliW. This chain is Translational regulator CsrA, found in Clostridium novyi (strain NT).